Reading from the N-terminus, the 201-residue chain is Ribosome maturation factor RimM (201 aa).

The 75-residue stretch at 92–166 (DEDEFYHADL…RVVVEPPANF (75 aa)) folds into the PRC barrel domain. The interval 169–201 (PAGPQPAEGEEMPDGALEALEGEEAGAGTAPQP) is disordered.

It belongs to the RimM family. In terms of assembly, binds ribosomal protein uS19.

The protein resides in the cytoplasm. Functionally, an accessory protein needed during the final step in the assembly of 30S ribosomal subunit, possibly for assembly of the head region. Essential for efficient processing of 16S rRNA. May be needed both before and after RbfA during the maturation of 16S rRNA. It has affinity for free ribosomal 30S subunits but not for 70S ribosomes. This Rhodospirillum centenum (strain ATCC 51521 / SW) protein is Ribosome maturation factor RimM.